The primary structure comprises 332 residues: ADP-L-glycero-D-manno-heptose-6-epimerase (332 aa).

NADP(+)-binding positions include 10 to 11, 31 to 32, Lys-38, 74 to 78, and Asn-91; these read FI, DD, and QGACS. Catalysis depends on Tyr-138, which acts as the Proton acceptor. Lys-142 contributes to the NADP(+) binding site. Substrate is bound at residue Asn-167. Positions 168 and 176 each coordinate NADP(+). The active-site Proton acceptor is Lys-176. Substrate contacts are provided by residues Arg-178, His-185, 199–202, Arg-212, and Tyr-291; that span reads FSGW.

This sequence belongs to the NAD(P)-dependent epimerase/dehydratase family. HldD subfamily. Homopentamer. NADP(+) serves as cofactor.

It carries out the reaction ADP-D-glycero-beta-D-manno-heptose = ADP-L-glycero-beta-D-manno-heptose. It functions in the pathway nucleotide-sugar biosynthesis; ADP-L-glycero-beta-D-manno-heptose biosynthesis; ADP-L-glycero-beta-D-manno-heptose from D-glycero-beta-D-manno-heptose 7-phosphate: step 4/4. Its function is as follows. Catalyzes the interconversion between ADP-D-glycero-beta-D-manno-heptose and ADP-L-glycero-beta-D-manno-heptose via an epimerization at carbon 6 of the heptose. This Bordetella avium (strain 197N) protein is ADP-L-glycero-D-manno-heptose-6-epimerase.